Here is a 250-residue protein sequence, read N- to C-terminus: uncharacterized protein (250 aa).

Residues 2-22 traverse the membrane as a helical segment; sequence ILRIIIFVIIILVVSLLLIYF.

Its subcellular location is the membrane. This is an uncharacterized protein from Acanthamoeba polyphaga (Amoeba).